The primary structure comprises 928 residues: DENN domain-containing protein 2C (928 aa).

2 disordered regions span residues 67-105 and 245-266; these read KSKN…YDDT and QSSL…IRGR. Positions 85–105 are enriched in basic and acidic residues; it reads ENTKSHDQSENENKKHEYDDT. Ser271 carries the post-translational modification Phosphoserine. Residues 428-456 are disordered; it reads KLHSYTGKELPPTKGETSGNESDAEYLPK. The region spanning 492 to 641 is the uDENN domain; it reads ELFVVVSLQK…PFPAPGRTIT (150 aa). Positions 663-796 constitute a cDENN domain; sequence RLEHVDFKCL…LQAALMQILE (134 aa). One can recognise a dDENN domain in the interval 798–888; the sequence is RNEILTQEQN…QDRELRKSGV (91 aa).

Functionally, guanine nucleotide exchange factor (GEF) which may activate RAB9A and RAB9B. Promotes the exchange of GDP to GTP, converting inactive GDP-bound Rab proteins into their active GTP-bound form. In Homo sapiens (Human), this protein is DENN domain-containing protein 2C (DENND2C).